We begin with the raw amino-acid sequence, 433 residues long: Enolase (433 aa).

Q163 is a (2R)-2-phosphoglycerate binding site. Residue E205 is the Proton donor of the active site. Mg(2+)-binding residues include D242, E291, and D318. Residues K343, R372, S373, and K394 each coordinate (2R)-2-phosphoglycerate. Catalysis depends on K343, which acts as the Proton acceptor.

Belongs to the enolase family. Mg(2+) is required as a cofactor.

The protein localises to the cytoplasm. Its subcellular location is the secreted. It is found in the cell surface. The enzyme catalyses (2R)-2-phosphoglycerate = phosphoenolpyruvate + H2O. The protein operates within carbohydrate degradation; glycolysis; pyruvate from D-glyceraldehyde 3-phosphate: step 4/5. In terms of biological role, catalyzes the reversible conversion of 2-phosphoglycerate (2-PG) into phosphoenolpyruvate (PEP). It is essential for the degradation of carbohydrates via glycolysis. This is Enolase from Methylibium petroleiphilum (strain ATCC BAA-1232 / LMG 22953 / PM1).